The primary structure comprises 428 residues: MKTSIFKSLYVQVLTAIAIGILLGHFYPELGAQMKPFGDAFVKLIKMVIAPVIFCTVVTGIAGMESMKAVGRTGAVALLYFEVVSTIALIIGLIIVNVVQPGAGMNVDPSTLDAKAVAVYAEQAKDQGVVAFLLDVIPGSVIGAFASGNILQVLLFAVLFGFALHRLGSKGQLIFNVIESFSQVIFGIINMIMRLAPIGAFGAMAFTIGKYGVGTLVQLGQLIICFYITCILFVVVVLGSIARATGFSIFKFIRYIREELLIVLGTSSSESALPRMLDKMEKLGCRKSVVGLVIPTGYSFNLDGTSIYLTMAAVFIAQATNSHMDIFHQITLLVVLLLSSKGAAGVTGSGFIVLAATISAVGHLPVAGLALILGIDRFMSEARALTNLVGNGVATVVVAKWVKELDAKQMDDVLNNRVPANKTHELSS.

The next 9 membrane-spanning stretches (helical) occupy residues 8-28 (SLYV…HFYP), 44-64 (LIKM…IAGM), 76-96 (VALL…LIIV), 142-162 (IGAF…LFGF), 184-204 (VIFG…FGAM), 222-242 (LIIC…GSIA), 289-309 (VVGL…SIYL), 326-346 (IFHQ…AAGV), and 352-372 (IVLA…LALI).

It belongs to the dicarboxylate/amino acid:cation symporter (DAACS) (TC 2.A.23) family.

It is found in the cell inner membrane. Responsible for the transport of dicarboxylates such as succinate, fumarate, and malate from the periplasm across the membrane. This is C4-dicarboxylate transport protein from Klebsiella pneumoniae subsp. pneumoniae (strain ATCC 700721 / MGH 78578).